The chain runs to 356 residues: Glutamine synthetase cytosolic isozyme 2 (356 aa).

Residues 19–99 form the GS beta-grasp domain; that stretch reads IIAEYIWIGG…VMCDTYTPAG (81 aa). The 251-residue stretch at 106–356 folds into the GS catalytic domain; the sequence is KRHNAAKIFS…IAESTILWKP (251 aa).

This sequence belongs to the glutamine synthetase family. As to quaternary structure, homooctamer.

The protein resides in the cytoplasm. It catalyses the reaction L-glutamate + NH4(+) + ATP = L-glutamine + ADP + phosphate + H(+). This Vitis vinifera (Grape) protein is Glutamine synthetase cytosolic isozyme 2 (GS1-2).